Here is a 349-residue protein sequence, read N- to C-terminus: MATATLTIDLDAIAANWRALDQMTASDCQTGAVVKADSYGLGAAKVAHALARAGARRFFVATCEEGADVRRALGSGPQICVFSGHMEGDTALIRDFDLTPMLNSIDQLTRHFEALGGQPFGLQLDSGMNRLGLEPGEWEAVAGFALEAGPELLMSHLACSDDPDHPMNAEQLGAFRAMTDGTGVPRSLSATGGILLGPAWHFELTRPGIGLYGGRPFEEARPVVRLSLPVIQVREVEIGEPVGYSNTWTAEHTSTIATVAAGYADGLPRTLSSRATLYAGRVPCPLVGRVSMDLITVDVSHLPEVPETLDILGPHQTPDDLADTAGTIGYEILTSLGRRYQRRYGALAA.

Residue Lys-35 is the Proton acceptor; specific for D-alanine of the active site. Lys-35 bears the N6-(pyridoxal phosphate)lysine mark. Arg-130 serves as a coordination point for substrate. Catalysis depends on Tyr-244, which acts as the Proton acceptor; specific for L-alanine. Met-292 serves as a coordination point for substrate.

The protein belongs to the alanine racemase family. It depends on pyridoxal 5'-phosphate as a cofactor.

It carries out the reaction L-alanine = D-alanine. The protein operates within amino-acid biosynthesis; D-alanine biosynthesis; D-alanine from L-alanine: step 1/1. In terms of biological role, catalyzes the interconversion of L-alanine and D-alanine. May also act on other amino acids. This chain is Alanine racemase (alr), found in Cereibacter sphaeroides (strain KD131 / KCTC 12085) (Rhodobacter sphaeroides).